We begin with the raw amino-acid sequence, 145 residues long: Spore coat protein YeeK (145 aa).

PG repeat units lie at residues 9 to 15, 22 to 28, 32 to 38, and 41 to 47; these read GGPGFGH, GHPGYGM, and GYPGYGM. 3 GGY repeats span residues 57–63, 66–72, and 74–80; these read GGVGGYP, GGYGGYP, and GGYGGSP. H4 repeat units follow at residues 99–105, 111–117, 121–127, and 131–137; these read YHHHHDG, HHHHHVG, HHHHHDG, and HHHHHMG. Residues 100-138 show a composition bias toward basic residues; it reads HHHHDGKDNLHHHHHHVGKDNHHHHHDGHYGHHHHHMGH. A disordered region spans residues 100–145; sequence HHHHDGKDNLHHHHHHVGKDNHHHHHDGHYGHHHHHMGHWGKDGYK.

It is found in the spore coat. Part of the spore coat. The polypeptide is Spore coat protein YeeK (yeeK) (Bacillus subtilis (strain 168)).